The primary structure comprises 669 residues: Methionine--tRNA ligase (669 aa).

The 'HIGH' region signature appears at 14-24 (YYPSGKLHIGN). Residue His161 participates in Zn(2+) binding. Residues 309–313 (KMSKS) carry the 'KMSKS' region motif. Residue Lys312 coordinates ATP. Residues 566 to 669 (DFDKVELKVA…KEMPNGAGIA (104 aa)) form the tRNA-binding domain.

This sequence belongs to the class-I aminoacyl-tRNA synthetase family. MetG type 2B subfamily. As to quaternary structure, homodimer.

The protein localises to the cytoplasm. The enzyme catalyses tRNA(Met) + L-methionine + ATP = L-methionyl-tRNA(Met) + AMP + diphosphate. Is required not only for elongation of protein synthesis but also for the initiation of all mRNA translation through initiator tRNA(fMet) aminoacylation. The sequence is that of Methionine--tRNA ligase from Enterococcus faecalis (strain ATCC 700802 / V583).